We begin with the raw amino-acid sequence, 440 residues long: Xaa-Pro dipeptidase (440 aa).

Mn(2+) is bound by residues Asp-244, Asp-255, His-335, Glu-380, and Glu-419.

The protein belongs to the peptidase M24B family. Bacterial-type prolidase subfamily. It depends on Mn(2+) as a cofactor.

It carries out the reaction Xaa-L-Pro dipeptide + H2O = an L-alpha-amino acid + L-proline. Its function is as follows. Splits dipeptides with a prolyl residue in the C-terminal position. In Shewanella loihica (strain ATCC BAA-1088 / PV-4), this protein is Xaa-Pro dipeptidase.